The sequence spans 338 residues: MLSPTFVLWDVGYPLYTYGSICIIALIIWQVKKSCQKLSLVPNRSCCRCHRRVQQKSGDRTSRARRTSQEEAEKLWKLLFLMKSQGWLPQEGSVRRILCADPCCQICNVMALEIKQLLAGENNQISLTSLGPSQGSSCLEALSTSSVSFKHSQDLGSPKSKELSLASVTPTLSQLMDQKSLTQSAARSAGADSVQDSWADHFQRGQRSQVPAVSQVMGSLSSNFEKPGIPLSQQERTKNNSKFVLENQEAPEVGLDNKMKLFLHWINPEMKDRRHEESILLSKAETVTQDRTKNIEKSPTVTKDHVWGATTQKTTEDPEAQPPSTEEEGLIFCDAPSA.

Residues 7 to 29 (VLWDVGYPLYTYGSICIIALIIW) traverse the membrane as a helical segment. The residue at position 152 (Ser-152) is a Phosphoserine. Over residues 290 to 306 (DRTKNIEKSPTVTKDHV) the composition is skewed to basic and acidic residues. The disordered stretch occupies residues 290–338 (DRTKNIEKSPTVTKDHVWGATTQKTTEDPEAQPPSTEEEGLIFCDAPSA).

It belongs to the SPATA31 family.

It localises to the membrane. The polypeptide is Protein SPATA31F3 (Homo sapiens (Human)).